The following is a 312-amino-acid chain: Photosystem I assembly protein Ycf4 (312 aa).

The next 3 helical transmembrane spans lie at 42–62 (WAFI…SSYF), 91–111 (IILF…GLFL), and 113–133 (FYLW…IYIY).

The protein belongs to the Ycf4 family.

The protein resides in the plastid. Its subcellular location is the chloroplast thylakoid membrane. Functionally, seems to be required for the assembly of the photosystem I complex. The chain is Photosystem I assembly protein Ycf4 from Pleurastrum terricola (Filamentous green alga).